Here is a 261-residue protein sequence, read N- to C-terminus: Probable septum site-determining protein MinC (261 aa).

The protein belongs to the MinC family. As to quaternary structure, interacts with MinD and FtsZ.

In terms of biological role, cell division inhibitor that blocks the formation of polar Z ring septums. Rapidly oscillates between the poles of the cell to destabilize FtsZ filaments that have formed before they mature into polar Z rings. Prevents FtsZ polymerization. This is Probable septum site-determining protein MinC from Burkholderia cenocepacia (strain ATCC BAA-245 / DSM 16553 / LMG 16656 / NCTC 13227 / J2315 / CF5610) (Burkholderia cepacia (strain J2315)).